The following is a 1019-amino-acid chain: Insulin-degrading enzyme (1019 aa).

Histidine 108 contacts Zn(2+). The active-site Proton acceptor is the glutamate 111. Histidine 112 and glutamate 189 together coordinate Zn(2+). At lysine 192 the chain carries N6-succinyllysine. Residues 336–342 (HLIGHEG) and 359–363 (LVGGQ) contribute to the substrate site. Arginine 429 is a binding site for ATP. Residue lysine 697 is modified to N6-succinyllysine. Residues 853-858 (EKPPHY) carry the SlyX motif motif. 895-901 (DKPKKLS) is a binding site for ATP.

Belongs to the peptidase M16 family. As to quaternary structure, homodimer. Can also form homotetramers. In terms of assembly, (Microbial infection) Interacts (via N-terminus) with varicella-zoster virus (VZV) envelope glycoprotein E (via N-terminus); the membrane-associated isoform may function as an entry receptor for this virus. Zn(2+) is required as a cofactor. The N-terminus is blocked. In terms of tissue distribution, detected in brain and in cerebrospinal fluid (at protein level).

It is found in the cytoplasm. It localises to the cytosol. The protein resides in the cell membrane. Its subcellular location is the secreted. The enzyme catalyses Degradation of insulin, glucagon and other polypeptides. No action on proteins.. With respect to regulation, activated by small peptides. Activated by ATP and GTP, and to a lesser extent by CTP, TTP and PPPi. Inhibited by bacitracin. In vitro modification of Cys residues impairs enzyme activity. In terms of biological role, plays a role in the cellular breakdown of insulin, APP peptides, IAPP peptides, natriuretic peptides, glucagon, bradykinin, kallidin, and other peptides, and thereby plays a role in intercellular peptide signaling. Substrate binding induces important conformation changes, making it possible to bind and degrade larger substrates, such as insulin. Contributes to the regulation of peptide hormone signaling cascades and regulation of blood glucose homeostasis via its role in the degradation of insulin, glucagon and IAPP. Plays a role in the degradation and clearance of APP-derived amyloidogenic peptides that are secreted by neurons and microglia. Degrades the natriuretic peptides ANP, BNP and CNP, inactivating their ability to raise intracellular cGMP. Also degrades an aberrant frameshifted 40-residue form of NPPA (fsNPPA) which is associated with familial atrial fibrillation in heterozygous patients. Involved in antigen processing. Produces both the N terminus and the C terminus of MAGEA3-derived antigenic peptide (EVDPIGHLY) that is presented to cytotoxic T lymphocytes by MHC class I. Functionally, (Microbial infection) The membrane-associated isoform acts as an entry receptor for varicella-zoster virus (VZV). This chain is Insulin-degrading enzyme, found in Homo sapiens (Human).